The primary structure comprises 200 residues: Small ribosomal subunit protein uS2 (200 aa).

The protein belongs to the universal ribosomal protein uS2 family.

The protein is Small ribosomal subunit protein uS2 of Picrophilus torridus (strain ATCC 700027 / DSM 9790 / JCM 10055 / NBRC 100828 / KAW 2/3).